Consider the following 301-residue polypeptide: Acetyl-coenzyme A carboxylase carboxyl transferase subunit beta (301 aa).

A CoA carboxyltransferase N-terminal domain is found at 25 to 294 (LWIKCPETGE…SAANDMNSGA (270 aa)).

This sequence belongs to the AccD/PCCB family. In terms of assembly, acetyl-CoA carboxylase is a heterohexamer composed of biotin carboxyl carrier protein (AccB), biotin carboxylase (AccC) and two subunits each of ACCase subunit alpha (AccA) and ACCase subunit beta (AccD).

It is found in the cytoplasm. The enzyme catalyses N(6)-carboxybiotinyl-L-lysyl-[protein] + acetyl-CoA = N(6)-biotinyl-L-lysyl-[protein] + malonyl-CoA. Its pathway is lipid metabolism; malonyl-CoA biosynthesis; malonyl-CoA from acetyl-CoA: step 1/1. Its function is as follows. Component of the acetyl coenzyme A carboxylase (ACC) complex. Biotin carboxylase (BC) catalyzes the carboxylation of biotin on its carrier protein (BCCP) and then the CO(2) group is transferred by the transcarboxylase to acetyl-CoA to form malonyl-CoA. The polypeptide is Acetyl-coenzyme A carboxylase carboxyl transferase subunit beta (Rhizobium leguminosarum bv. trifolii (strain WSM1325)).